We begin with the raw amino-acid sequence, 122 residues long: Large ribosomal subunit protein uL14 (122 aa).

The protein belongs to the universal ribosomal protein uL14 family. As to quaternary structure, part of the 50S ribosomal subunit. Forms a cluster with proteins L3 and L19. In the 70S ribosome, L14 and L19 interact and together make contacts with the 16S rRNA in bridges B5 and B8.

Functionally, binds to 23S rRNA. Forms part of two intersubunit bridges in the 70S ribosome. In Roseiflexus castenholzii (strain DSM 13941 / HLO8), this protein is Large ribosomal subunit protein uL14.